Here is a 460-residue protein sequence, read N- to C-terminus: MFFDTIAAISTPLGTGGVSVIRVSGNNSITEINKIFKGKNLIKAKTHTITHGFILNKDQTILDEVLISVFKTPNSFTGENVVEINAHGGILITQMVLERILSLDIRLAFPGEFSQRAYLNGKMDLIQAESIMDLIHATNENAIKIANSGLQKYTSQLVTSLRDQILNLIAQIEVNIDYPEYDDIPQITQQKIALEVQSLIKQLENILSHSHKNRYLKEGIKTLIIGRPNVGKSSLLNAFLNENKAIVSDISGTTRDFVEAYFNCRGFTLHLIDTAGIRKTDDPIEKIGILRTEKMLLQAELILLVLDQSNYLQEEDIQLLQLTQNYPRIIIGNKVDLKSDKLISSLCDYSSQLTPQEIISVSSLDKTGFFELQQTILKKFQLNDIKPKDFNYFSNARHINQIQIALRSFQDLQQALLQSMPIDIYSIDLTKAYQALGQIIGENQENSLIKELFSKFCLGK.

Arg22, Glu83, and Lys122 together coordinate (6S)-5-formyl-5,6,7,8-tetrahydrofolate. The region spanning 219–381 is the TrmE-type G domain; it reads GIKTLIIGRP…LQQTILKKFQ (163 aa). Residue Asn229 participates in K(+) binding. Residues 229–234, 248–254, and 273–276 each bind GTP; these read NVGKSS, SDISGTT, and DTAG. Residue Ser233 participates in Mg(2+) binding. 3 residues coordinate K(+): Ser248, Ile250, and Thr253. Mg(2+) is bound at residue Thr254. Residue Lys460 participates in (6S)-5-formyl-5,6,7,8-tetrahydrofolate binding.

The protein belongs to the TRAFAC class TrmE-Era-EngA-EngB-Septin-like GTPase superfamily. TrmE GTPase family. Homodimer. Heterotetramer of two MnmE and two MnmG subunits. K(+) serves as cofactor.

It is found in the cytoplasm. In terms of biological role, exhibits a very high intrinsic GTPase hydrolysis rate. Involved in the addition of a carboxymethylaminomethyl (cmnm) group at the wobble position (U34) of certain tRNAs, forming tRNA-cmnm(5)s(2)U34. The sequence is that of tRNA modification GTPase MnmE from Aster yellows witches'-broom phytoplasma (strain AYWB).